A 105-amino-acid polypeptide reads, in one-letter code: Large ribosomal subunit protein bL21 (105 aa).

It belongs to the bacterial ribosomal protein bL21 family. As to quaternary structure, part of the 50S ribosomal subunit. Contacts protein L20.

Its function is as follows. This protein binds to 23S rRNA in the presence of protein L20. The chain is Large ribosomal subunit protein bL21 from Rhizobium etli (strain CIAT 652).